The sequence spans 318 residues: Glutathione synthetase (318 aa).

One can recognise an ATP-grasp domain in the interval 133 to 317 (KMYALQFTSV…LGQQVMAWLF (185 aa)). 159-215 (VQQQGMAVLKPLGGKGGEGILFLQAGDRNLNSMIEISTQRGQLPVMLQEYLPAAKEG) serves as a coordination point for ATP. Residues E288 and N290 each coordinate Mg(2+).

The protein belongs to the prokaryotic GSH synthase family. The cofactor is Mg(2+). Mn(2+) serves as cofactor.

The enzyme catalyses gamma-L-glutamyl-L-cysteine + glycine + ATP = glutathione + ADP + phosphate + H(+). It participates in sulfur metabolism; glutathione biosynthesis; glutathione from L-cysteine and L-glutamate: step 2/2. This chain is Glutathione synthetase, found in Thermosynechococcus vestitus (strain NIES-2133 / IAM M-273 / BP-1).